Consider the following 338-residue polypeptide: Lipoate-protein ligase A (338 aa).

A BPL/LPL catalytic domain is found at 29-216 (PATQRVLFLW…AFFAHYGERV (188 aa)). ATP is bound by residues Arg71, 76 to 79 (GAVF), and Lys134. Residue Lys134 coordinates (R)-lipoate.

This sequence belongs to the LplA family. In terms of assembly, monomer.

It localises to the cytoplasm. The enzyme catalyses L-lysyl-[lipoyl-carrier protein] + (R)-lipoate + ATP = N(6)-[(R)-lipoyl]-L-lysyl-[lipoyl-carrier protein] + AMP + diphosphate + H(+). The protein operates within protein modification; protein lipoylation via exogenous pathway; protein N(6)-(lipoyl)lysine from lipoate: step 1/2. It participates in protein modification; protein lipoylation via exogenous pathway; protein N(6)-(lipoyl)lysine from lipoate: step 2/2. In terms of biological role, catalyzes both the ATP-dependent activation of exogenously supplied lipoate to lipoyl-AMP and the transfer of the activated lipoyl onto the lipoyl domains of lipoate-dependent enzymes. In Escherichia coli (strain 55989 / EAEC), this protein is Lipoate-protein ligase A.